Reading from the N-terminus, the 312-residue chain is uncharacterized protein (312 aa).

It belongs to the asfivirus CP312R family.

Its subcellular location is the virion. This is an uncharacterized protein from African swine fever virus (strain Badajoz 1971 Vero-adapted) (Ba71V).